Reading from the N-terminus, the 335-residue chain is G-protein coupled receptor 157 (335 aa).

Over 1 to 15 (MQPSPPPTELVPSER) the chain is Extracellular. The helical transmembrane segment at 16–36 (AVVLLSCALSALGSGLLVATH) threads the bilayer. At 37-48 (ALWPDLRSRARR) the chain is on the cytoplasmic side. The helical transmembrane segment at 49–69 (LLLFLSLADLLSAASYFYGVL) threads the bilayer. The Extracellular segment spans residues 70–87 (QNFAGPSWDCVLQGALST). The helical transmembrane segment at 88–108 (FANTSSFFWTVAIALYLYLSI) threads the bilayer. At 109–119 (VRAARGPRTDR) the chain is on the cytoplasmic side. A helical membrane pass occupies residues 120 to 140 (LLWAFHVVSWGVPLVITVAAV). Residues 141 to 166 (ALKKIGYDASDVSVGWCWIDLEAKDH) are Extracellular-facing. Residues 167–187 (VLWMLLTGKLWEMLAYVLLPL) traverse the membrane as a helical segment. Topologically, residues 188 to 226 (LYLLVRKHINRAHTALSEYRPILSQEHRLLRHSSMADKK) are cytoplasmic. Residues 227 to 247 (LVLIPLIFIGLRVWSTVRFVL) form a helical membrane-spanning segment. At 248 to 258 (TLCGSPAVQTP) the chain is on the extracellular side. Residues 259 to 279 (VLVVLHGIGNTFQGGANCIMF) traverse the membrane as a helical segment. The Cytoplasmic segment spans residues 280–335 (VLCTRAVRTRLFSLCCCCCSSQPPTKSPAGTPKAPAPSKPGESQESQGTPGELPST). The tract at residues 300–335 (SQPPTKSPAGTPKAPAPSKPGESQESQGTPGELPST) is disordered. A compositionally biased stretch (polar residues) spans 320–335 (GESQESQGTPGELPST).

The protein belongs to the G-protein coupled receptor 2 family.

The protein resides in the cell projection. It localises to the cilium membrane. Orphan receptor that promotes neuronal differentiation of radial glial progenitors (RGPs). The activity of this receptor is mediated by a G(q)-protein that activates a phosphatidylinositol-calcium second messenger. This chain is G-protein coupled receptor 157 (GPR157), found in Homo sapiens (Human).